Consider the following 189-residue polypeptide: Thioredoxin-like protein CITRX, chloroplastic (189 aa).

The N-terminal 36 residues, 1-36 (MAMAAAASLLPACAAPTLPGRAFRPRRNSTPTASLS), are a transit peptide targeting the chloroplast. In terms of domain architecture, Thioredoxin spans 72 to 189 (GSGKYIAPDY…MIRNIIDNEL (118 aa)). Residues C112 and C115 each act as nucleophile in the active site. An intrachain disulfide couples C112 to C115.

The protein belongs to the thioredoxin family. Plant CITRX-type subfamily.

Its subcellular location is the plastid. It is found in the chloroplast. Functionally, probable thiol-disulfide oxidoreductase that may play a role in proper chloroplast development. In Oryza sativa subsp. indica (Rice), this protein is Thioredoxin-like protein CITRX, chloroplastic.